Consider the following 241-residue polypeptide: tRNA (guanine-N(7)-)-methyltransferase (241 aa).

Over residues 1-10 (MTESNETPNT) the composition is skewed to polar residues. A disordered region spans residues 1-21 (MTESNETPNTPEAGDESKHRR). S-adenosyl-L-methionine is bound by residues glutamate 71, glutamate 96, aspartate 123, and aspartate 146. Aspartate 146 is a catalytic residue. Substrate-binding positions include lysine 150, aspartate 182, and 219-222 (TKFE).

It belongs to the class I-like SAM-binding methyltransferase superfamily. TrmB family.

The catalysed reaction is guanosine(46) in tRNA + S-adenosyl-L-methionine = N(7)-methylguanosine(46) in tRNA + S-adenosyl-L-homocysteine. It functions in the pathway tRNA modification; N(7)-methylguanine-tRNA biosynthesis. Its function is as follows. Catalyzes the formation of N(7)-methylguanine at position 46 (m7G46) in tRNA. This is tRNA (guanine-N(7)-)-methyltransferase from Pseudomonas fluorescens (strain SBW25).